The primary structure comprises 248 residues: Segregation and condensation protein A (248 aa).

Belongs to the ScpA family. As to quaternary structure, component of a cohesin-like complex composed of ScpA, ScpB and the Smc homodimer, in which ScpA and ScpB bind to the head domain of Smc. The presence of the three proteins is required for the association of the complex with DNA.

Its subcellular location is the cytoplasm. Functionally, participates in chromosomal partition during cell division. May act via the formation of a condensin-like complex containing Smc and ScpB that pull DNA away from mid-cell into both cell halves. The sequence is that of Segregation and condensation protein A from Clostridium perfringens (strain ATCC 13124 / DSM 756 / JCM 1290 / NCIMB 6125 / NCTC 8237 / Type A).